Consider the following 401-residue polypeptide: 3-hydroxyisobutyryl-CoA hydrolase-like protein 1, mitochondrial (401 aa).

The N-terminal 26 residues, 1 to 26 (MHNAKGLLGRIVRDKLWRFGYRRSLC), are a transit peptide targeting the mitochondrion.

Belongs to the enoyl-CoA hydratase/isomerase family.

The protein resides in the mitochondrion. This chain is 3-hydroxyisobutyryl-CoA hydrolase-like protein 1, mitochondrial, found in Arabidopsis thaliana (Mouse-ear cress).